Consider the following 260-residue polypeptide: 5'-nucleotidase SurE (260 aa).

Positions 8, 9, 39, and 96 each coordinate a divalent metal cation.

The protein belongs to the SurE nucleotidase family. It depends on a divalent metal cation as a cofactor.

The protein localises to the cytoplasm. It carries out the reaction a ribonucleoside 5'-phosphate + H2O = a ribonucleoside + phosphate. In terms of biological role, nucleotidase that shows phosphatase activity on nucleoside 5'-monophosphates. This is 5'-nucleotidase SurE from Moorella thermoacetica (strain ATCC 39073 / JCM 9320).